The following is a 64-amino-acid chain: Large ribosomal subunit protein bL35 (64 aa).

The protein belongs to the bacterial ribosomal protein bL35 family.

The sequence is that of Large ribosomal subunit protein bL35 from Pseudomonas savastanoi pv. phaseolicola (strain 1448A / Race 6) (Pseudomonas syringae pv. phaseolicola (strain 1448A / Race 6)).